The sequence spans 130 residues: DNA-directed RNA polymerase subunit omega (130 aa).

Residues 110–130 are disordered; sequence EELLKGLEGLAPPEEQPEEDE.

This sequence belongs to the RNA polymerase subunit omega family. As to quaternary structure, the RNAP catalytic core consists of 2 alpha, 1 beta, 1 beta' and 1 omega subunit. When a sigma factor is associated with the core the holoenzyme is formed, which can initiate transcription.

It catalyses the reaction RNA(n) + a ribonucleoside 5'-triphosphate = RNA(n+1) + diphosphate. Promotes RNA polymerase assembly. Latches the N- and C-terminal regions of the beta' subunit thereby facilitating its interaction with the beta and alpha subunits. In Bradyrhizobium sp. (strain BTAi1 / ATCC BAA-1182), this protein is DNA-directed RNA polymerase subunit omega.